A 132-amino-acid polypeptide reads, in one-letter code: Large ribosomal subunit protein bL21 (132 aa).

Positions 104–132 (GKAPSIGPRPPREKKPVVETSAEADDAAA) are disordered.

The protein belongs to the bacterial ribosomal protein bL21 family. As to quaternary structure, part of the 50S ribosomal subunit. Contacts protein L20.

This protein binds to 23S rRNA in the presence of protein L20. In Rhodopseudomonas palustris (strain BisB18), this protein is Large ribosomal subunit protein bL21.